The following is an 86-amino-acid chain: Large ribosomal subunit protein bL31B (86 aa).

The protein belongs to the bacterial ribosomal protein bL31 family. Type B subfamily. In terms of assembly, part of the 50S ribosomal subunit.

This Vibrio campbellii (strain ATCC BAA-1116) protein is Large ribosomal subunit protein bL31B.